We begin with the raw amino-acid sequence, 398 residues long: Cyclin-dependent kinase D-1 (398 aa).

In terms of domain architecture, Protein kinase spans 11 to 291 (YLKREVLGQG…IQQALKHRYF (281 aa)). ATP contacts are provided by residues 17 to 25 (LGQGTYGVV) and Lys-40. Tyr-22 carries the phosphotyrosine modification. Asp-133 (proton acceptor) is an active-site residue. Ser-160 is subject to Phosphoserine. Thr-166 is modified (phosphothreonine). Residues 296-318 (SPTDPLKLPRPVSKQDAKSSDSK) form a disordered region. Positions 308-318 (SKQDAKSSDSK) are enriched in basic and acidic residues.

The protein belongs to the protein kinase superfamily. CMGC Ser/Thr protein kinase family. CDC2/CDKX subfamily. In terms of processing, autophosphorylated. As to expression, expressed at low levels in suspension cell culture, but not in plant organs.

It localises to the nucleus. It catalyses the reaction L-seryl-[protein] + ATP = O-phospho-L-seryl-[protein] + ADP + H(+). The enzyme catalyses L-threonyl-[protein] + ATP = O-phospho-L-threonyl-[protein] + ADP + H(+). The catalysed reaction is [DNA-directed RNA polymerase] + ATP = phospho-[DNA-directed RNA polymerase] + ADP + H(+). This chain is Cyclin-dependent kinase D-1 (CDKD-1), found in Arabidopsis thaliana (Mouse-ear cress).